Reading from the N-terminus, the 119-residue chain is Holo-[acyl-carrier-protein] synthase (119 aa).

The Mg(2+) site is built by Asp-8 and Glu-58.

The protein belongs to the P-Pant transferase superfamily. AcpS family. Mg(2+) is required as a cofactor.

The protein resides in the cytoplasm. It carries out the reaction apo-[ACP] + CoA = holo-[ACP] + adenosine 3',5'-bisphosphate + H(+). Its function is as follows. Transfers the 4'-phosphopantetheine moiety from coenzyme A to a Ser of acyl-carrier-protein. This Streptococcus mutans serotype c (strain ATCC 700610 / UA159) protein is Holo-[acyl-carrier-protein] synthase.